A 440-amino-acid chain; its full sequence is MQAYFDQLDRVRYEGPQSTNPLAFRHYNPDELVLGKRMEDHLRFAACYWHTFCWNGADMFGVGAFNRPWQQPGEALELAKRKADVAFEFFHKLNVPFYCFHDVDVSPEGASLKEYKNNFAQMVDVLAAKQEQSGVKLLWGTANCFTNPRYGAGAATNPDPEVFSWAATQVVTAMNATHKLGGENYVLWGGREGYETLLNTDLRQEREQIGRFMQMVVEHKHKMGFQGTLLIEPKPQEPTKHQYDYDVATVYGFLKQFGLEKEIKVNIEANHATLAGHSFHHEIATAIALGIFGSVDANRGDAQLGWDTDQFPISVEENALVMYEILKAGGFTTGGLNFDAKVRRQSTDKYDLFYGHIGAMDTMALSLKIAARMVEDGELDKRVAKRYAGWNSELGQQILKGQLSLGELAQYAEQHNLAPVHQSGHQELLENLVNRYLFDK.

Residues His101 and Asp104 contribute to the active site. Mg(2+) is bound by residues Glu232, Glu268, His271, Asp296, Asp307, Asp309, and Asp339.

Belongs to the xylose isomerase family. In terms of assembly, homotetramer. It depends on Mg(2+) as a cofactor.

The protein localises to the cytoplasm. The catalysed reaction is alpha-D-xylose = alpha-D-xylulofuranose. This is Xylose isomerase from Salmonella dublin (strain CT_02021853).